The chain runs to 433 residues: Oxysterol-binding protein-like protein OBPa (433 aa).

The protein belongs to the OSBP family.

The sequence is that of Oxysterol-binding protein-like protein OBPa (OBPA) from Candida albicans (strain SC5314 / ATCC MYA-2876) (Yeast).